Consider the following 874-residue polypeptide: Ectonucleotide pyrophosphatase/phosphodiesterase family member 3 (874 aa).

Residues 1-11 (MQSTLNLSTEE) lie on the Cytoplasmic side of the membrane. Residues 12–30 (PVKRNTVKKYKIICIVLLI) traverse the membrane as a helical; Signal-anchor for type II membrane protein segment. Residues 31 to 874 (LLVAVSLALG…TYLPVFETVI (844 aa)) lie on the Extracellular side of the membrane. SMB domains are found at residues 50–93 (EQGS…VQST) and 94–138 (QIWT…GETS). 10 disulfide bridges follow: Cys-54-Cys-71, Cys-58-Cys-89, Cys-69-Cys-82, Cys-75-Cys-81, Cys-98-Cys-115, Cys-103-Cys-133, Cys-113-Cys-126, Cys-119-Cys-125, Cys-144-Cys-190, and Cys-152-Cys-364. Residues 78–80 (RGD) carry the Cell attachment site motif. The phosphodiesterase stretch occupies residues 160 to 544 (PVILFSMDGF…HGSLNHLLKV (385 aa)). Asp-167 serves as a coordination point for Zn(2+). Residue Lys-204 participates in ATP binding. Thr-205 serves as a coordination point for Zn(2+). Catalysis depends on Thr-205, which acts as the Nucleophile. Asn-226 serves as a coordination point for ATP. N-linked (GlcNAc...) asparagine glycosylation occurs at Asn-236. Asp-275 lines the ATP pocket. N-linked (GlcNAc...) asparagine glycosylation is present at Asn-279. Tyr-289 provides a ligand contact to ATP. Asn-290 carries N-linked (GlcNAc...) asparagine glycosylation. Zn(2+) contacts are provided by Asp-325, His-329, Asp-372, and His-373. Cystine bridges form between Cys-380-Cys-477, Cys-428-Cys-817, Cys-561-Cys-622, Cys-574-Cys-678, Cys-576-Cys-663, and Cys-786-Cys-796. N-linked (GlcNAc...) asparagine glycosylation occurs at Asn-425. His-482 contributes to the Zn(2+) binding site. Asn-532 carries an N-linked (GlcNAc...) asparagine glycan. The interval 581 to 874 (TNSDLERVNQ…TYLPVFETVI (294 aa)) is nuclease. N-linked (GlcNAc...) asparagine glycans are attached at residues Asn-677, Asn-686, and Asn-698. Residues Asp-751, Asp-755, His-757, and Asp-759 each contribute to the Ca(2+) site. N-linked (GlcNAc...) asparagine glycans are attached at residues Asn-770, Asn-788, and Asn-820.

The protein belongs to the nucleotide pyrophosphatase/phosphodiesterase family. In terms of assembly, monomer and homodimer. The cofactor is Zn(2+). N-glycosylated. N-glycosylation is necessary for normal transport to the cell membrane, but is not the apical targeting signal.

It is found in the cell membrane. The protein resides in the apical cell membrane. The protein localises to the secreted. The enzyme catalyses a ribonucleoside 5'-triphosphate + H2O = a ribonucleoside 5'-phosphate + diphosphate + H(+). It catalyses the reaction ATP + H2O = AMP + diphosphate + H(+). It carries out the reaction CTP + H2O = CMP + diphosphate + H(+). The catalysed reaction is GTP + H2O = GMP + diphosphate + H(+). The enzyme catalyses UTP + H2O = UMP + diphosphate + H(+). It catalyses the reaction UDP-N-acetyl-alpha-D-glucosamine + H2O = N-acetyl-alpha-D-glucosamine 1-phosphate + UMP + 2 H(+). It carries out the reaction P(1),P(3)-bis(5'-adenosyl) triphosphate + H2O = AMP + ADP + 2 H(+). The catalysed reaction is P(1),P(4)-bis(5'-adenosyl) tetraphosphate + H2O = AMP + ATP + 2 H(+). The enzyme catalyses P(1),P(5)-bis(5'-adenosyl) pentaphosphate + H2O = adenosine 5'-tetraphosphate + AMP + 2 H(+). It catalyses the reaction P(1),P(4)-bis(5'-guanosyl) tetraphosphate + H2O = GMP + GTP + 2 H(+). It carries out the reaction Hydrolytically removes 5'-nucleotides successively from the 3'-hydroxy termini of 3'-hydroxy-terminated oligonucleotides.. Its function is as follows. Hydrolase that metabolizes extracellular nucleotides, including ATP, GTP, UTP and CTP. Limits mast cells and basophils response during inflammation and during the chronic phases of allergic responses by eliminating extracellular ATP, a signaling molecule activating these cells in an autocrine manner. Metabolizes extracellular ATP in the lumen of the small intestine, and thereby prevents ATP-induced apoptosis of intestinal plasmacytoid dendritic cells. Has a broad specificity and can also hydrolyze UDP-GlcNAc into UMP and GlcNAc-1-phosphate and potentially several other intracellular nucleotide sugars, including UDP-GalNAc, CMP-NeuAc, GDP-Fuc, and UDP-GlcA. Thereby, could modulate glycan biosynthesis and protein glycosylation. Can hydrolyze extracellular dinucleoside polyphosphates, including the vasoactive adenosine polyphosphates as well. In addition, displays an alkaline phosphodiesterase activity in vitro. In Bos taurus (Bovine), this protein is Ectonucleotide pyrophosphatase/phosphodiesterase family member 3 (ENPP3).